Here is a 109-residue protein sequence, read N- to C-terminus: MDIWCPEKKYLRYTNGFNVSELEDVCFKYNYQFPKVGYCRVPNYAWCRNQGSFCATFTLYGKSKHYDKYFGIITGFTAFSNSLEEAVNKLVFLAVDFITWRSQSLNVYG.

Belongs to the coronaviruses ns12.7 protein family.

This chain is Non-structural protein of 12.7 kDa, found in Sus scrofa (Pig).